We begin with the raw amino-acid sequence, 246 residues long: tRNA pseudouridine synthase A (246 aa).

The active-site Nucleophile is Asp-54. Tyr-112 provides a ligand contact to substrate.

It belongs to the tRNA pseudouridine synthase TruA family. As to quaternary structure, homodimer.

It carries out the reaction uridine(38/39/40) in tRNA = pseudouridine(38/39/40) in tRNA. In terms of biological role, formation of pseudouridine at positions 38, 39 and 40 in the anticodon stem and loop of transfer RNAs. This is tRNA pseudouridine synthase A from Moorella thermoacetica (strain ATCC 39073 / JCM 9320).